Here is a 293-residue protein sequence, read N- to C-terminus: Nucleotide-binding protein Csac_1160 (293 aa).

11-18 (GMSGAGKS) provides a ligand contact to ATP. 62–65 (DIRG) is a binding site for GTP.

This sequence belongs to the RapZ-like family.

Functionally, displays ATPase and GTPase activities. This chain is Nucleotide-binding protein Csac_1160, found in Caldicellulosiruptor saccharolyticus (strain ATCC 43494 / DSM 8903 / Tp8T 6331).